The chain runs to 277 residues: Methylamine utilization protein MauF (277 aa).

7 helical membrane passes run Ile33 to Ala53, Leu59 to Cys79, Tyr111 to Phe131, Ser132 to His152, Trp179 to Thr199, Met205 to Phe225, and Ala257 to Ile277.

Its subcellular location is the cell membrane. It functions in the pathway one-carbon metabolism; methylamine degradation. This is Methylamine utilization protein MauF (mauF) from Paracoccus denitrificans.